A 116-amino-acid polypeptide reads, in one-letter code: Ig heavy chain V region 1B43 (116 aa).

The N-terminal stretch at 1-18 (MRVLILLCLFTAFPGILS) is a signal peptide. The segment at 19–48 (DVQLQESGPDLVKPSQSLSLTCTVTGYSIT) is framework-1. A disulfide bridge connects residues Cys40 and Cys114. The segment at 49–53 (SGYSW) is complementarity-determining-1. The tract at residues 54 to 67 (HWIRQFPGNKLEWM) is framework-2. Positions 68 to 84 (GYIHYSGNTSYNPSLKS) are complementarity-determining-2. The segment at 85 to 116 (RISITRDTSKNQFFLQLNSVTTEDTATYYCAR) is framework-3.

This Mus musculus (Mouse) protein is Ig heavy chain V region 1B43.